Consider the following 162-residue polypeptide: CASP-like protein BLE3 (162 aa).

The Cytoplasmic segment spans residues 1–7 (MAKVHRL). The helical transmembrane segment at 8-28 (MNAVLRLAAAAAAATAAVVMV) threads the bilayer. The Extracellular segment spans residues 29–50 (TSRETTSFFGIQMEAKYSYTPS). Residues 51 to 71 (FIFFVVAYAVAAAYSLLVLAV) traverse the membrane as a helical segment. Residues 72 to 85 (PAGSALSRLALTTD) are Cytoplasmic-facing. The chain crosses the membrane as a helical span at residues 86–106 (VVLGMVLAGAVASAGAISDIA). Residues 107 to 128 (KNGNSHAGWLPVCGQIHAYCNH) are Extracellular-facing. A helical membrane pass occupies residues 129-149 (VMAALIAGFVALAVHFVVVMY). The Cytoplasmic segment spans residues 150-162 (SLHIVTDVICPCH).

Belongs to the Casparian strip membrane proteins (CASP) family. In terms of assembly, homodimer and heterodimers.

The protein localises to the cell membrane. Functionally, involved in cell elongation in rice through dual regulation by brassinolide and auxin. This chain is CASP-like protein BLE3 (BLE3), found in Oryza sativa subsp. indica (Rice).